The chain runs to 250 residues: Ribosomal RNA small subunit methyltransferase J (250 aa).

S-adenosyl-L-methionine contacts are provided by residues 96–97 (RD) and Asp-168.

The protein belongs to the methyltransferase superfamily. RsmJ family.

It is found in the cytoplasm. The enzyme catalyses guanosine(1516) in 16S rRNA + S-adenosyl-L-methionine = N(2)-methylguanosine(1516) in 16S rRNA + S-adenosyl-L-homocysteine + H(+). Specifically methylates the guanosine in position 1516 of 16S rRNA. This Neisseria meningitidis serogroup C (strain 053442) protein is Ribosomal RNA small subunit methyltransferase J.